Consider the following 372-residue polypeptide: Chloroplast protein FOR GROWTH AND FERTILITY 2 (372 aa).

The segment at M1 to S20 is disordered. Residues M1 to S78 constitute a chloroplast transit peptide. The segment covering P7–S20 has biased composition (polar residues). Helical transmembrane passes span V109–F129, F161–L181, A195–L215, V231–P251, G281–P301, F309–G329, and L352–Y372.

Mostly expressed in leaves, stems and flowers, to a lower extent, in roots, floral bud, inflorescence and siliques, and, barely, in seedlings.

The protein resides in the plastid. Its subcellular location is the chloroplast membrane. It localises to the plastid membrane. In terms of biological role, together with CGF1, essential protein which supports female gametogenesis and embryogenesis, probably by securing local energy supply. The chain is Chloroplast protein FOR GROWTH AND FERTILITY 2 from Arabidopsis thaliana (Mouse-ear cress).